Consider the following 421-residue polypeptide: Type II methyltransferase M.SfiI (421 aa).

This sequence belongs to the N(4)/N(6)-methyltransferase family. N(4) subfamily.

It catalyses the reaction a 2'-deoxycytidine in DNA + S-adenosyl-L-methionine = an N(4)-methyl-2'-deoxycytidine in DNA + S-adenosyl-L-homocysteine + H(+). In terms of biological role, a beta subtype methylase, recognizes the double-stranded sequence 5'-GGCCNNNNNGGCC-3', methylates C-? on both strands, and protects the DNA from cleavage by the SfiI endonuclease. This Streptomyces fimbriatus protein is Type II methyltransferase M.SfiI.